A 583-amino-acid chain; its full sequence is Long-chain-fatty-acid--AMP ligase FadD26 (583 aa).

This sequence belongs to the ATP-dependent AMP-binding enzyme family.

It catalyses the reaction holo-[(phenol)carboxyphthiodiolenone synthase] + a long-chain fatty acid + ATP = a long-chain fatty acyl-[(phenol)carboxyphthiodiolenone synthase] + AMP + diphosphate. The enzyme catalyses eicosanoate + holo-[(phenol)carboxyphthiodiolenone synthase] + ATP = icosanoyl-[(phenol)carboxyphthiodiolenone synthase] + AMP + diphosphate. The catalysed reaction is holo-[(phenol)carboxyphthiodiolenone synthase] + docosanoate + ATP = docosanoyl-[(phenol)carboxyphthiodiolenone synthase] + AMP + diphosphate. It participates in lipid metabolism; fatty acid biosynthesis. Functionally, catalyzes the activation of long-chain fatty acids as acyl-adenylates (acyl-AMP), which are then transferred to the multifunctional polyketide synthase PpsA for further chain extension. Catalyzes the adenylation of the long-chain fatty acids eicosanoate (C20) or docosanoate (C22), and potentially the very-long-chain fatty acid lignocerate (C24). Involved in the biosynthesis of phthiocerol dimycocerosate (DIM A) and phthiodiolone dimycocerosate (DIM B). The sequence is that of Long-chain-fatty-acid--AMP ligase FadD26 (fadD26) from Mycobacterium bovis (strain ATCC BAA-935 / AF2122/97).